A 218-amino-acid chain; its full sequence is Ras-related protein Rab-27B (218 aa).

Residue Thr-2 is modified to N-acetylthreonine. Position 16 to 24 (16 to 24) interacts with GTP; the sequence is GDSGVGKTT. Positions 38–46 match the Effector region motif; that stretch reads FITTVGIDF. Residues 74–78, 133–136, and 163–165 each bind GTP; these read DTAGQ, NKAD, and SAA. An intrachain disulfide couples Cys-123 to Cys-188. S-geranylgeranyl cysteine attachment occurs at residues Cys-216 and Cys-218. Position 218 is a cysteine methyl ester (Cys-218).

The protein belongs to the small GTPase superfamily. Rab family. In terms of assembly, interacts with SYTL2, SYTL4, MYRIP and MLPH. Interacts with RPH3A and RPH3A. Interacts (GDP-bound form preferentially) with DENND10.

It localises to the membrane. The protein localises to the late endosome. The enzyme catalyses GTP + H2O = GDP + phosphate + H(+). Its activity is regulated as follows. Regulated by guanine nucleotide exchange factors (GEFs) which promote the exchange of bound GDP for free GTP, GTPase activating proteins (GAPs) which increase the GTP hydrolysis activity, and GDP dissociation inhibitors which inhibit the dissociation of the nucleotide from the GTPase. Activated by GEFs such as DENND10. Functionally, small GTPase which cycles between active GTP-bound and inactive GDP-bound states. In its active state, binds to a variety of effector proteins to regulate homeostasis of late endocytic pathway, including endosomal positioning, maturation and secretion. Plays a role in NTRK2/TRKB axonal anterograde transport by facilitating the association of NTRK2/TRKB with KLC1. May be involved in targeting uroplakins to urothelial apical membranes. The polypeptide is Ras-related protein Rab-27B (Rab27b) (Rattus norvegicus (Rat)).